Consider the following 86-residue polypeptide: UPF0386 protein RC1_1783 (86 aa).

The protein belongs to the UPF0386 family.

This is UPF0386 protein RC1_1783 from Rhodospirillum centenum (strain ATCC 51521 / SW).